The chain runs to 403 residues: uncharacterized protein (403 aa).

The first 26 residues, M1–S26, serve as a signal peptide directing secretion. The Extracellular portion of the chain corresponds to F27–S381. 7 N-linked (GlcNAc...) asparagine glycosylation sites follow: N58, N90, N93, N124, N137, N371, and N375. A helical membrane pass occupies residues I382–I402. I403 is a topological domain (cytoplasmic).

The protein localises to the membrane. This is an uncharacterized protein from Dictyostelium discoideum (Social amoeba).